The primary structure comprises 493 residues: MSKKYIIALDQGTTSSRAIVFDHDTKMVASSQREFSQMYPQPGWVEHDAMEIWASQSSTLIEVLARADIHSEDVAAIGITNQRETTVVWDKVTGKPVYNAIVWQCRRSKAICDELKAQGLEDYIKQTTGLVLDPYFSGTKIKWILDNVEGVRERAEKGELLFGTIDTWLVWKLTEGKVHVTDPTNASRTMLFNIHTQQWDDKLLDAFDIPRSILPEVKPSSAIYGYTRIAGEGSHIAIAGMAGDQQSALFGQLCIEEGMAKNTYGTGCFLLMNTGVEAVQSQHGLLTTIAIGADGGINYALEGSVFMGGATVQWLRDELGLIRDAQDTEYFAKKVEDTNGVYLIPAFVGLGAPYWDPDARGALVGLTRGANRNHIIRAALEAIAYQSRDLLDAMSKDSCVELKQIKVDGGAVANDFLMQFQADITNVEVLRPELTETTALGAAFLAGLAVGFWDSTDELKHKAGIERNFTPQISMQKRDSLYKGWQEAVTRTR.

Residue Thr-13 participates in ADP binding. 3 residues coordinate ATP: Thr-13, Thr-14, and Ser-15. Sn-glycerol 3-phosphate is bound at residue Thr-13. ADP is bound at residue Arg-17. 4 residues coordinate sn-glycerol 3-phosphate: Arg-83, Glu-84, Tyr-135, and Asp-244. Residues Arg-83, Glu-84, Tyr-135, Asp-244, and Gln-245 each contribute to the glycerol site. Residues Thr-266 and Gly-309 each contribute to the ADP site. 4 residues coordinate ATP: Thr-266, Gly-309, Gln-313, and Gly-410. ADP contacts are provided by Gly-410 and Asn-414.

This sequence belongs to the FGGY kinase family.

It carries out the reaction glycerol + ATP = sn-glycerol 3-phosphate + ADP + H(+). The protein operates within polyol metabolism; glycerol degradation via glycerol kinase pathway; sn-glycerol 3-phosphate from glycerol: step 1/1. With respect to regulation, inhibited by fructose 1,6-bisphosphate (FBP). Functionally, key enzyme in the regulation of glycerol uptake and metabolism. Catalyzes the phosphorylation of glycerol to yield sn-glycerol 3-phosphate. In Shewanella pealeana (strain ATCC 700345 / ANG-SQ1), this protein is Glycerol kinase.